Reading from the N-terminus, the 420-residue chain is MLTNPIFYLTNSNTSKASTHSNTNSKSLFNTKREDLQILYKLNQLLIEKSILHPYQRILIAVSGGQDSICLLNILNKLRSTWHWKLGIVHCDHKWYLDSALQAIHVSRLAANMQIDLYQALTTQSVNNEQLARNWRYELIRHVAICHNFSVIVTGHTASDRVETLIYNLIRGSGISGLQSISWKRKLNSMLTIRMRSVEEQIILYSKHVKCYQNRENLLEDKKNVDIYLIRPLLNVSRMELKHLVQNWKLSIWSDCSNQNISICRNRIRHQLLPYLRQYFHPKIDYVLNSCTEVMYTETLYLDSIARYVLSKALSFISMPLNDQTCVKLDFELLRAVPLAIQRRILKYFLDVITHTSVSFKHVEQVRIACLITTNSSNQFAKDSMNFTDQLLINRSIYLPGKKILQVINARFLIICNNIT.

Residue 63-68 (SGGQDS) participates in ATP binding.

The protein belongs to the tRNA(Ile)-lysidine synthase family.

It localises to the plastid. The protein resides in the chloroplast. The enzyme catalyses cytidine(34) in tRNA(Ile2) + L-lysine + ATP = lysidine(34) in tRNA(Ile2) + AMP + diphosphate + H(+). Its function is as follows. Ligates lysine onto the cytidine present at position 34 of the AUA codon-specific tRNA(Ile) that contains the anticodon CAU, in an ATP-dependent manner. Cytidine is converted to lysidine, thus changing the amino acid specificity of the tRNA from methionine to isoleucine. This chain is tRNA(Ile)-lysidine synthase, chloroplastic, found in Zygnema circumcarinatum (Green alga).